The following is a 400-amino-acid chain: Signal recognition particle receptor FtsY (400 aa).

Disordered stretches follow at residues 12-37 and 51-86; these read TKKTNQVEQDEPILDQQDQQDQQEEQ and NKIKKTKTSETKKQEKPIETLKEKKKREKQKEKDKK. The segment covering 51 to 72 has biased composition (basic and acidic residues); sequence NKIKKTKTSETKKQEKPIETLK. GTP is bound by residues 192 to 199, 278 to 282, and 342 to 345; these read GVNGTGKT, DTAGR, and TKMD.

This sequence belongs to the GTP-binding SRP family. FtsY subfamily. In terms of assembly, part of the signal recognition particle protein translocation system, which is composed of SRP and FtsY.

The protein resides in the cell membrane. It localises to the cytoplasm. The catalysed reaction is GTP + H2O = GDP + phosphate + H(+). Functionally, involved in targeting and insertion of nascent membrane proteins into the cytoplasmic membrane. Acts as a receptor for the complex formed by the signal recognition particle (SRP) and the ribosome-nascent chain (RNC). The polypeptide is Signal recognition particle receptor FtsY (Mycoplasma mycoides subsp. mycoides SC (strain CCUG 32753 / NCTC 10114 / PG1)).